A 299-amino-acid polypeptide reads, in one-letter code: Hairy/enhancer-of-split related with YRPW motif protein 1 (299 aa).

The disordered stretch occupies residues 1 to 53 (MKRAHPDYSSSDSELDETIEVEKESADENGNLSSALCSMSPTTSSQVLARKRR). Over residues 28–47 (ENGNLSSALCSMSPTTSSQV) the composition is skewed to polar residues. The tract at residues 48-117 (LARKRRRGII…GGKGYFDAHA (70 aa)) is transcriptional repression and interaction with NCOR1 and SIN3A. The region spanning 49-104 (ARKRRRGIIEKRRRDRINNSLSELRRLVPSAFEKQGSAKLEKAEILQMTVDHLKML) is the bHLH domain. Residues 122–158 (YRSLGFRECLAEVARYLSIIEGLDASDPLLVRLVSHL) enclose the Orange domain. The tract at residues 194-234 (LLLPQNGHGNAGTAASPTEPHHQGRLASAHPEAPALRAPPS) is disordered. The short motif at 289-292 (YRPW) is the YRPW motif element.

The protein belongs to the HEY family. May self-associate. Interacts with HES1, NCOR1 and SIN3A. Interacts with GATA4, GATA6 and HDAC1 and HEYL. Interacts with CCDC89/BOIP. Expressed in somitic mesoderm, brain, central nervous system, kidney, heart, nasal epithelium, limbs, lung, muscle, ovary and testis.

It localises to the nucleus. Functionally, transcriptional repressor which binds preferentially to the canonical E box sequence 5'-CACGTG-3'. Downstream effector of Notch signaling required for cardiovascular development. Specifically required for the Notch-induced endocardial epithelial to mesenchymal transition, which is itself criticial for cardiac valve and septum development. May be required in conjunction with HEY2 to specify arterial cell fate or identity. Promotes maintenance of neuronal precursor cells and glial versus neuronal fate specification. Represses transcription by the cardiac transcriptional activators GATA4 and GATA6 and by the neuronal bHLH factors ASCL1/MASH1 and NEUROD4/MATH3. This chain is Hairy/enhancer-of-split related with YRPW motif protein 1 (Hey1), found in Mus musculus (Mouse).